Reading from the N-terminus, the 232-residue chain is MAVISMKQLLEAGVHFGHQTRRWNPKMAPYIFTDRNGIYIIDLQKTVKKVEECYDFVKQLAGEGGTLLFVGTKKQAQEAVKEEAERCGMFFVNQRWLGGMLTNFQTIRNRIDRLHELERMEEDGTFEVLPKKEVAQLLHEKEKLDKFLGGIKNMRRLPGALFVIDPRKERIAVAEARKLGIPIVAIVDTNCDPDEIDYVIPGNDDAIRAVKLLTGKIADAILEGKQGEQVAE.

The protein belongs to the universal ribosomal protein uS2 family.

In Desulforamulus reducens (strain ATCC BAA-1160 / DSM 100696 / MI-1) (Desulfotomaculum reducens), this protein is Small ribosomal subunit protein uS2.